A 102-amino-acid polypeptide reads, in one-letter code: Small ribosomal subunit protein uS10 (102 aa).

Belongs to the universal ribosomal protein uS10 family. As to quaternary structure, part of the 30S ribosomal subunit.

In terms of biological role, involved in the binding of tRNA to the ribosomes. The sequence is that of Small ribosomal subunit protein uS10 from Fervidobacterium nodosum (strain ATCC 35602 / DSM 5306 / Rt17-B1).